A 124-amino-acid polypeptide reads, in one-letter code: Large ribosomal subunit protein bL12 (124 aa).

The protein belongs to the bacterial ribosomal protein bL12 family. Homodimer. Part of the ribosomal stalk of the 50S ribosomal subunit. Forms a multimeric L10(L12)X complex, where L10 forms an elongated spine to which 2 to 4 L12 dimers bind in a sequential fashion. Binds GTP-bound translation factors.

In terms of biological role, forms part of the ribosomal stalk which helps the ribosome interact with GTP-bound translation factors. Is thus essential for accurate translation. The chain is Large ribosomal subunit protein bL12 from Janthinobacterium sp. (strain Marseille) (Minibacterium massiliensis).